Reading from the N-terminus, the 283-residue chain is Protein/nucleic acid deglycase HchA (283 aa).

3 residues coordinate Zn(2+): H86, E91, and H123. Catalysis depends on C185, which acts as the Nucleophile.

This sequence belongs to the peptidase C56 family. HchA subfamily. As to quaternary structure, homodimer.

It is found in the cytoplasm. It catalyses the reaction N(omega)-(1-hydroxy-2-oxopropyl)-L-arginyl-[protein] + H2O = lactate + L-arginyl-[protein] + H(+). The enzyme catalyses N(6)-(1-hydroxy-2-oxopropyl)-L-lysyl-[protein] + H2O = lactate + L-lysyl-[protein] + H(+). It carries out the reaction S-(1-hydroxy-2-oxopropyl)-L-cysteinyl-[protein] + H2O = lactate + L-cysteinyl-[protein] + H(+). The catalysed reaction is N(omega)-(1-hydroxy-2-oxoethyl)-L-arginyl-[protein] + H2O = L-arginyl-[protein] + glycolate + H(+). It catalyses the reaction N(6)-(1-hydroxy-2-oxoethyl)-L-lysyl-[protein] + H2O = glycolate + L-lysyl-[protein] + H(+). The enzyme catalyses S-(1-hydroxy-2-oxoethyl)-L-cysteinyl-[protein] + H2O = glycolate + L-cysteinyl-[protein] + H(+). It carries out the reaction N(2)-(1-hydroxy-2-oxopropyl)-dGTP + H2O = lactate + dGTP + H(+). The catalysed reaction is N(2)-(1-hydroxy-2-oxopropyl)-GTP + H2O = lactate + GTP + H(+). It catalyses the reaction N(2)-(1-hydroxy-2-oxopropyl)-GDP + H2O = lactate + GDP + H(+). The enzyme catalyses N(2)-(1-hydroxy-2-oxopropyl)-GMP + H2O = lactate + GMP + H(+). It carries out the reaction N(2)-(1-hydroxy-2-oxoethyl)-dGTP + H2O = dGTP + glycolate + H(+). The catalysed reaction is N(2)-(1-hydroxy-2-oxoethyl)-GTP + H2O = glycolate + GTP + H(+). It catalyses the reaction N(2)-(1-hydroxy-2-oxoethyl)-GDP + H2O = glycolate + GDP + H(+). The enzyme catalyses N(2)-(1-hydroxy-2-oxoethyl)-GMP + H2O = glycolate + GMP + H(+). It carries out the reaction an N(2)-(1-hydroxy-2-oxopropyl)-guanosine in RNA + H2O = a guanosine in RNA + lactate + H(+). The catalysed reaction is an N(2)-(1-hydroxy-2-oxopropyl)-2'-deoxyguanosine in DNA + H2O = a 2'-deoxyguanosine in DNA + lactate + H(+). It catalyses the reaction an N(2)-(1-hydroxy-2-oxoethyl)-guanosine in RNA + H2O = a guanosine in RNA + glycolate + H(+). The enzyme catalyses an N(2)-(1-hydroxy-2-oxoethyl)-2'-deoxyguanosine in DNA + H2O = a 2'-deoxyguanosine in DNA + glycolate + H(+). Protein and nucleotide deglycase that catalyzes the deglycation of the Maillard adducts formed between amino groups of proteins or nucleotides and reactive carbonyl groups of glyoxals. Thus, functions as a protein deglycase that repairs methylglyoxal- and glyoxal-glycated proteins, and releases repaired proteins and lactate or glycolate, respectively. Deglycates cysteine, arginine and lysine residues in proteins, and thus reactivates these proteins by reversing glycation by glyoxals. Acts on early glycation intermediates (hemithioacetals and aminocarbinols), preventing the formation of Schiff bases and advanced glycation endproducts (AGE). Also functions as a nucleotide deglycase able to repair glycated guanine in the free nucleotide pool (GTP, GDP, GMP, dGTP) and in DNA and RNA. Is thus involved in a major nucleotide repair system named guanine glycation repair (GG repair), dedicated to reversing methylglyoxal and glyoxal damage via nucleotide sanitization and direct nucleic acid repair. Plays an important role in protecting cells from carbonyl stress. This Escherichia coli O157:H7 protein is Protein/nucleic acid deglycase HchA.